Here is a 437-residue protein sequence, read N- to C-terminus: Serine carboxypeptidase-like 10 (437 aa).

An N-terminal signal peptide occupies residues 1 to 21; the sequence is MGSTLKHLLLLLLVLIRHVDS. Disulfide bonds link Cys-80-Cys-327, Cys-243-Cys-257, and Cys-281-Cys-293. An N-linked (GlcNAc...) asparagine glycan is attached at Asn-101. Ser-175 is a catalytic residue. A glycan (N-linked (GlcNAc...) asparagine) is linked at Asn-328. Asp-362 is a catalytic residue. N-linked (GlcNAc...) asparagine glycosylation occurs at Asn-378. The active site involves His-415. N-linked (GlcNAc...) asparagine glycosylation is present at Asn-422.

It belongs to the peptidase S10 family. In terms of tissue distribution, expressed in senescent leaves.

It localises to the secreted. Functionally, involved in the biosynthesis of sinapoylated anthocyanins. In Arabidopsis thaliana (Mouse-ear cress), this protein is Serine carboxypeptidase-like 10 (SCPL10).